A 213-amino-acid polypeptide reads, in one-letter code: uncharacterized protein (213 aa).

Catalysis depends on charge relay system residues Ser-114, Asp-162, and His-194.

The protein belongs to the AB hydrolase superfamily. AB hydrolase 2 family.

This is an uncharacterized protein from Rickettsia bellii (strain RML369-C).